Reading from the N-terminus, the 394-residue chain is Small ribosomal subunit protein mS79 (rPPR3b) (394 aa).

The N-terminal 24 residues, 1-24 (MSSLSRFLLRGNFSFSTHTNRRFF), are a transit peptide targeting the mitochondrion. 8 PPR repeats span residues 105 to 139 (KEGF…NCKR), 140 to 170 (TALS…LPGK), 176 to 210 (DVAS…GLKP), 211 to 245 (DHIT…NVKR), 246 to 280 (DIRS…ELKP), 281 to 315 (DVFT…GCRP), 316 to 350 (LKFV…RLLV), and 351 to 385 (DEAV…DYLQ).

The protein belongs to the PPR family. P subfamily. As to quaternary structure, component of the mitochondrial ribosome small subunit.

The protein localises to the mitochondrion. The polypeptide is Small ribosomal subunit protein mS79 (rPPR3b) (Arabidopsis thaliana (Mouse-ear cress)).